The chain runs to 265 residues: tRNA (guanine-N(1)-)-methyltransferase (265 aa).

Residues G110 and L129–M134 contribute to the S-adenosyl-L-methionine site. The disordered stretch occupies residues L243–N265. The segment covering P254 to N265 has biased composition (basic residues).

Belongs to the RNA methyltransferase TrmD family. As to quaternary structure, homodimer.

The protein resides in the cytoplasm. It catalyses the reaction guanosine(37) in tRNA + S-adenosyl-L-methionine = N(1)-methylguanosine(37) in tRNA + S-adenosyl-L-homocysteine + H(+). Its function is as follows. Specifically methylates guanosine-37 in various tRNAs. This is tRNA (guanine-N(1)-)-methyltransferase from Deinococcus geothermalis (strain DSM 11300 / CIP 105573 / AG-3a).